The chain runs to 156 residues: Probable chemoreceptor glutamine deamidase CheD (156 aa).

Belongs to the CheD family.

It catalyses the reaction L-glutaminyl-[protein] + H2O = L-glutamyl-[protein] + NH4(+). Its function is as follows. Probably deamidates glutamine residues to glutamate on methyl-accepting chemotaxis receptors (MCPs), playing an important role in chemotaxis. The protein is Probable chemoreceptor glutamine deamidase CheD of Sulfurimonas denitrificans (strain ATCC 33889 / DSM 1251) (Thiomicrospira denitrificans (strain ATCC 33889 / DSM 1251)).